Here is a 375-residue protein sequence, read N- to C-terminus: Isopentenyl-diphosphate delta-isomerase (375 aa).

Position 8–9 (8–9 (RK)) interacts with substrate. FMN contacts are provided by residues Thr-65, 66–68 (GMT), Ser-96, and Asn-125. 96–98 (SQR) is a binding site for substrate. A substrate-binding site is contributed by Gln-160. Glu-161 is a binding site for Mg(2+). Residues Lys-192, Thr-222, 273-275 (GVR), and 294-295 (AL) contribute to the FMN site.

Belongs to the IPP isomerase type 2 family. Homooctamer. Dimer of tetramers. It depends on FMN as a cofactor. NADPH is required as a cofactor. Mg(2+) serves as cofactor.

It localises to the cytoplasm. The enzyme catalyses isopentenyl diphosphate = dimethylallyl diphosphate. Functionally, involved in the biosynthesis of isoprenoids. Catalyzes the 1,3-allylic rearrangement of the homoallylic substrate isopentenyl (IPP) to its allylic isomer, dimethylallyl diphosphate (DMAPP). This chain is Isopentenyl-diphosphate delta-isomerase, found in Aeropyrum pernix (strain ATCC 700893 / DSM 11879 / JCM 9820 / NBRC 100138 / K1).